The primary structure comprises 981 residues: Rab3 GTPase-activating protein catalytic subunit (981 aa).

Residues serine 83, serine 379, serine 536, serine 579, serine 581, and serine 590 each carry the phosphoserine modification. The interval 532–558 (GKKTSLSDSTTSAYPGDAGKTGGQLGL) is disordered. The interval 591–614 (DTEDLKGNGQESGKKGGPKEMANL) is disordered. Serine 664 bears the Phosphoserine mark.

It belongs to the Rab3-GAP catalytic subunit family. The Rab3 GTPase-activating complex is a heterodimer composed of Rab3gap1 and Rab3gap2. The Rab3 GTPase-activating complex interacts with DMXL2. Interacts with LMAN1. In the eye, it is highly expressed within the lens, particularly in the anterior lens epithelium and in a ring corresponding to the equatorial region where anterior cells are differentiating into lens fibers. Also highly expressed in the retina.

The protein localises to the cytoplasm. It is found in the endoplasmic reticulum. The protein resides in the golgi apparatus. Its subcellular location is the cis-Golgi network. Its function is as follows. Catalytic subunit of the Rab3 GTPase-activating (Rab3GAP) complex composed of RAB3GAP1 and RAB3GAP2, which has GTPase-activating protein (GAP) activity towards various Rab3 subfamily members (RAB3A, RAB3B, RAB3C and RAB3D), RAB5A and RAB43, and guanine nucleotide exchange factor (GEF) activity towards RAB18. As part of the Rab3GAP complex, acts as a GAP for Rab3 proteins by converting active RAB3-GTP to the inactive form RAB3-GDP. Rab3 proteins are involved in regulated exocytosis of neurotransmitters and hormones. The Rab3GAP complex, acts as a GEF for RAB18 by promoting the conversion of inactive RAB18-GDP to the active form RAB18-GTP. Recruits and stabilizes RAB18 at the cis-Golgi membrane where RAB18 is most likely activated. Also involved in RAB18 recruitment at the endoplasmic reticulum (ER) membrane where it maintains proper ER structure. Required for normal eye and brain development. May participate in neurodevelopmental processes such as proliferation, migration and differentiation before synapse formation, and non-synaptic vesicular release of neurotransmitters. The polypeptide is Rab3 GTPase-activating protein catalytic subunit (Mus musculus (Mouse)).